The primary structure comprises 486 residues: Glycogen synthase (486 aa).

Residue Lys-20 participates in ADP-alpha-D-glucose binding.

This sequence belongs to the glycosyltransferase 1 family. Bacterial/plant glycogen synthase subfamily.

The catalysed reaction is [(1-&gt;4)-alpha-D-glucosyl](n) + ADP-alpha-D-glucose = [(1-&gt;4)-alpha-D-glucosyl](n+1) + ADP + H(+). It functions in the pathway glycan biosynthesis; glycogen biosynthesis. Functionally, synthesizes alpha-1,4-glucan chains using ADP-glucose. The chain is Glycogen synthase from Aeromonas hydrophila subsp. hydrophila (strain ATCC 7966 / DSM 30187 / BCRC 13018 / CCUG 14551 / JCM 1027 / KCTC 2358 / NCIMB 9240 / NCTC 8049).